Here is a 447-residue protein sequence, read N- to C-terminus: ATP-dependent protease ATPase subunit HslU (447 aa).

ATP is bound by residues Ile18, 60-65 (GVGKTE), Asp259, Glu325, and Arg397.

The protein belongs to the ClpX chaperone family. HslU subfamily. A double ring-shaped homohexamer of HslV is capped on each side by a ring-shaped HslU homohexamer. The assembly of the HslU/HslV complex is dependent on binding of ATP.

It is found in the cytoplasm. Its function is as follows. ATPase subunit of a proteasome-like degradation complex; this subunit has chaperone activity. The binding of ATP and its subsequent hydrolysis by HslU are essential for unfolding of protein substrates subsequently hydrolyzed by HslV. HslU recognizes the N-terminal part of its protein substrates and unfolds these before they are guided to HslV for hydrolysis. In Burkholderia lata (strain ATCC 17760 / DSM 23089 / LMG 22485 / NCIMB 9086 / R18194 / 383), this protein is ATP-dependent protease ATPase subunit HslU.